Reading from the N-terminus, the 361-residue chain is Ribosomal RNA large subunit methyltransferase M (361 aa).

Residues S187, 220-223 (CPGG), D239, D259, and D276 contribute to the S-adenosyl-L-methionine site. Residue K305 is the Proton acceptor of the active site.

This sequence belongs to the class I-like SAM-binding methyltransferase superfamily. RNA methyltransferase RlmE family. RlmM subfamily. In terms of assembly, monomer.

The protein resides in the cytoplasm. The catalysed reaction is cytidine(2498) in 23S rRNA + S-adenosyl-L-methionine = 2'-O-methylcytidine(2498) in 23S rRNA + S-adenosyl-L-homocysteine + H(+). Functionally, catalyzes the 2'-O-methylation at nucleotide C2498 in 23S rRNA. This chain is Ribosomal RNA large subunit methyltransferase M, found in Shewanella sp. (strain MR-7).